Consider the following 176-residue polypeptide: MARKNQKAPWEEEEEIIWVSKTEMKNDMEDLQKLGEELVGLKPSVLAKFPLSDDLREAINDAQRFKNEAKRRQLQFIGKLMRNEDPEPIQLALDKIRNKHSQATAALHKLETLRDRMIEEGDAVIEEVMVKYPDADRQRFRQLARQAKKEKASNKPPKAFREIFQILKDLYLNEDL.

The protein belongs to the DarP family.

It is found in the cytoplasm. Functionally, member of a network of 50S ribosomal subunit biogenesis factors which assembles along the 30S-50S interface, preventing incorrect 23S rRNA structures from forming. Promotes peptidyl transferase center (PTC) maturation. This Aliivibrio fischeri (strain MJ11) (Vibrio fischeri) protein is Dual-action ribosomal maturation protein DarP.